Reading from the N-terminus, the 778-residue chain is Preaspterpenacid I synthase sttA (778 aa).

Residues 4–359 (ISDVMKHCVP…RYHRTDLATT (356 aa)) are sesterterpenoid synthase. Aspartate 105 is a Mg(2+) binding site. Residue aspartate 105 coordinates substrate. A substrate region spans residues 211–214 (RVNE). Asparagine 255 is a binding site for substrate. Substrate regions lie at residues 259-263 (SFPKE) and 350-351 (RY). Residues 360 to 774 (AEDRATLIGK…RMMLLGMGPK (415 aa)) are geranylfarneyl diphosphate synthase. Residues 423 to 445 (AFKKSNPRNGKQNGTEGSKGTFT) are disordered. Residues 429 to 445 (PRNGKQNGTEGSKGTFT) show a composition bias toward polar residues. Positions 493, 496, and 525 each coordinate isopentenyl diphosphate. Residues aspartate 532 and aspartate 536 each coordinate Mg(2+). Arginine 541 serves as a coordination point for dimethylallyl diphosphate. An isopentenyl diphosphate-binding site is contributed by arginine 542. The dimethylallyl diphosphate site is built by lysine 619, threonine 620, glutamine 657, asparagine 664, and lysine 674.

In the N-terminal section; belongs to the terpene synthase family. This sequence in the C-terminal section; belongs to the FPP/GGPP synthase family.

The catalysed reaction is 4 isopentenyl diphosphate + dimethylallyl diphosphate = (2E,6E,10E,14E)-geranylfarnesyl diphosphate + 4 diphosphate. It catalyses the reaction (2E,6E,10E,14E)-geranylfarnesyl diphosphate + H2O = preaspterpenacid acid I + diphosphate. It participates in secondary metabolite biosynthesis; terpenoid biosynthesis. Sesterterpenoid synthase; part of the gene cluster that mediates the biosynthesis of aspterpenacids. Performs both prenyl transferase and terpene cyclase activity, converting isopentenyl diphosphate and dimethylallyl diphosphate into geranylfarnesyl diphosphate (GFPP) and then converting GFPP into preaspterpenacid I. C22-oxidative modification of preaspterpenacid I by the cytochrome P450 monooxygenase sttB then leads to preaspterpenacid II. It has still to be determined how preaspterpenacid II is further modified to produce aspterpenacids. The polypeptide is Preaspterpenacid I synthase sttA (Aspergillus terreus).